We begin with the raw amino-acid sequence, 151 residues long: uncharacterized protein (151 aa).

3 helical membrane-spanning segments follow: residues 12 to 32 (LAYF…LFII), 59 to 79 (LAFL…YGLL), and 114 to 134 (YFAY…IAFG).

It is found in the cell membrane. This is an uncharacterized protein from Bacillus subtilis (strain 168).